The primary structure comprises 363 residues: Proline/serine-rich coiled-coil protein 1 (363 aa).

Ser-22 carries the phosphoserine modification. Repeat unit 1 spans residues 38–41 (PEKP). The interval 39 to 67 (EKPLRRGLSHRSDPNAVAPAPQGVRLSLG) is disordered. Position 42 is a phosphoserine (Leu-42). Gly-45 carries the phosphothreonine modification. Ser-47, Ser-65, Ser-70, Ser-98, Ser-122, and Ser-140 each carry phosphoserine. Repeat unit 2 spans residues 68–71 (PLSP). Residues 70-94 (SPEKLEEILDEANRLAAQLEQCALQ) adopt a coiled-coil conformation. Positions 95 to 363 (DRESAGEGLG…RKVAVPGPTR (269 aa)) are disordered. Residues 103 to 246 (LGPRRVKPSP…HPSPPGPPTP (144 aa)) are 4 X 4 AA repeats of P-X-X-P. Over residues 112–124 (PRRETFVLKDSPV) the composition is skewed to basic and acidic residues. A compositionally biased stretch (low complexity) spans 133–148 (SLTRSTPSPSSLTPRL). Thr-145 is modified (phosphothreonine). Ser-186 and Ser-190 each carry phosphoserine. Polar residues predominate over residues 186 to 196 (SPASSPLTRST). Residues 197–210 (PPVRGRAGPSGRAA) show a composition bias toward low complexity. Ser-212 is subject to Phosphoserine. Thr-215 is modified (phosphothreonine). Tandem repeats lie at residues 238 to 241 (PSPP) and 243 to 246 (PPTP).

Belongs to the PSRC1 family. Interacts with APC2. Interacts with KIF2A. Interacts with ANKRD53; recruits ANKRD53 to the spindle during mitosis. Post-translationally, phosphorylated during mitosis. In terms of tissue distribution, widely expressed in adult and fetal tissues, with highest expression in the adult brain and fetal thymus. Not detected in adult skeletal muscle.

It is found in the cytoplasm. It localises to the cytoskeleton. The protein localises to the spindle. Its subcellular location is the spindle pole. Its function is as follows. Required for normal progression through mitosis. Required for normal congress of chromosomes at the metaphase plate, and for normal rate of chromosomal segregation during anaphase. Plays a role in the regulation of mitotic spindle dynamics. Increases the rate of turnover of microtubules on metaphase spindles, and contributes to the generation of normal tension across sister kinetochores. Recruits KIF2A and ANKRD53 to the mitotic spindle and spindle poles. May participate in p53/TP53-regulated growth suppression. The polypeptide is Proline/serine-rich coiled-coil protein 1 (PSRC1) (Homo sapiens (Human)).